The chain runs to 63 residues: Putative alpha-neurotoxin RjAa9 (63 aa).

The region spanning 1–60 is the LCN-type CS-alpha/beta domain; sequence KEGYPVDWGNCKYECMSDEYCKDLCADRKATSGYCYKLNWSCYCKGLPDDSPIKTPGKCR. 4 disulfides stabilise this stretch: Cys11/Cys59, Cys15/Cys35, Cys21/Cys42, and Cys25/Cys44.

Belongs to the long (4 C-C) scorpion toxin superfamily. Sodium channel inhibitor family. Alpha subfamily. As to expression, expressed by the venom gland.

It is found in the secreted. Alpha toxins bind voltage-independently at site-3 of sodium channels (Nav) and inhibits the inactivation of the activated channels, thereby blocking neuronal transmission. The polypeptide is Putative alpha-neurotoxin RjAa9 (Rhopalurus junceus (Caribbean blue scorpion)).